A 122-amino-acid polypeptide reads, in one-letter code: MICOS complex subunit MIC13 homolog QIL1 (122 aa).

The chain crosses the membrane as a helical span at residues 9 to 25 (GGLVAATVYYTQKVGIW).

The protein belongs to the MICOS complex subunit Mic13 family. In terms of assembly, component of the mitochondrial contact site and cristae organizing system (MICOS) complex.

It localises to the mitochondrion inner membrane. Component of the MICOS complex, a large protein complex of the mitochondrial inner membrane that plays crucial roles in the maintenance of crista junctions, inner membrane architecture, and formation of contact sites to the outer membrane. This is MICOS complex subunit MIC13 homolog QIL1 from Drosophila melanogaster (Fruit fly).